A 180-amino-acid chain; its full sequence is Adenine phosphoribosyltransferase (180 aa).

This sequence belongs to the purine/pyrimidine phosphoribosyltransferase family. As to quaternary structure, homodimer.

It is found in the cytoplasm. It catalyses the reaction AMP + diphosphate = 5-phospho-alpha-D-ribose 1-diphosphate + adenine. It functions in the pathway purine metabolism; AMP biosynthesis via salvage pathway; AMP from adenine: step 1/1. Its function is as follows. Catalyzes a salvage reaction resulting in the formation of AMP, that is energically less costly than de novo synthesis. The chain is Adenine phosphoribosyltransferase from Mycobacterium avium (strain 104).